An 88-amino-acid polypeptide reads, in one-letter code: Exodeoxyribonuclease 7 small subunit (88 aa).

Positions 69 to 88 (ALAEEADPEDGASGADGGGA) are disordered.

The protein belongs to the XseB family. In terms of assembly, heterooligomer composed of large and small subunits.

Its subcellular location is the cytoplasm. The enzyme catalyses Exonucleolytic cleavage in either 5'- to 3'- or 3'- to 5'-direction to yield nucleoside 5'-phosphates.. In terms of biological role, bidirectionally degrades single-stranded DNA into large acid-insoluble oligonucleotides, which are then degraded further into small acid-soluble oligonucleotides. This is Exodeoxyribonuclease 7 small subunit from Streptomyces coelicolor (strain ATCC BAA-471 / A3(2) / M145).